We begin with the raw amino-acid sequence, 828 residues long: Glycerol-3-phosphate acyltransferase (828 aa).

The HXXXXD motif signature appears at 309 to 314 (CHRSHI).

This sequence belongs to the GPAT/DAPAT family.

The protein resides in the cell inner membrane. The catalysed reaction is sn-glycerol 3-phosphate + an acyl-CoA = a 1-acyl-sn-glycero-3-phosphate + CoA. Its pathway is phospholipid metabolism; CDP-diacylglycerol biosynthesis; CDP-diacylglycerol from sn-glycerol 3-phosphate: step 1/3. The chain is Glycerol-3-phosphate acyltransferase from Pseudomonas entomophila (strain L48).